We begin with the raw amino-acid sequence, 332 residues long: L-lactate dehydrogenase A chain (332 aa).

Residues 29–57 (GAVG…IEDK) and R99 contribute to the NAD(+) site. Substrate-binding residues include R106, N138, and R169. N138 lines the NAD(+) pocket. Catalysis depends on H193, which acts as the Proton acceptor. Residue T248 coordinates substrate.

The protein belongs to the LDH/MDH superfamily. LDH family. Homotetramer.

Its subcellular location is the cytoplasm. The enzyme catalyses (S)-lactate + NAD(+) = pyruvate + NADH + H(+). The protein operates within fermentation; pyruvate fermentation to lactate; (S)-lactate from pyruvate: step 1/1. In terms of biological role, interconverts simultaneously and stereospecifically pyruvate and lactate with concomitant interconversion of NADH and NAD(+). In Pelodiscus sinensis japonicus (Chinese soft-shelled turtle), this protein is L-lactate dehydrogenase A chain (LDHA).